We begin with the raw amino-acid sequence, 348 residues long: Beta-hexosaminidase (348 aa).

Substrate is bound by residues Asp62, Arg70, Arg134, and 164-165; that span reads KH. His177 acts as the Proton donor/acceptor in catalysis. Residue Asp249 is the Nucleophile of the active site.

This sequence belongs to the glycosyl hydrolase 3 family. NagZ subfamily.

It localises to the cytoplasm. The enzyme catalyses Hydrolysis of terminal non-reducing N-acetyl-D-hexosamine residues in N-acetyl-beta-D-hexosaminides.. Its pathway is cell wall biogenesis; peptidoglycan recycling. In terms of biological role, plays a role in peptidoglycan recycling by cleaving the terminal beta-1,4-linked N-acetylglucosamine (GlcNAc) from peptide-linked peptidoglycan fragments, giving rise to free GlcNAc, anhydro-N-acetylmuramic acid and anhydro-N-acetylmuramic acid-linked peptides. This chain is Beta-hexosaminidase, found in Histophilus somni (strain 2336) (Haemophilus somnus).